Here is a 347-residue protein sequence, read N- to C-terminus: Beta-hexosaminidase (347 aa).

Substrate-binding positions include D62, R70, R134, and 164–165; that span reads KH. H177 functions as the Proton donor/acceptor in the catalytic mechanism. D249 acts as the Nucleophile in catalysis.

The protein belongs to the glycosyl hydrolase 3 family. NagZ subfamily.

It localises to the cytoplasm. The catalysed reaction is Hydrolysis of terminal non-reducing N-acetyl-D-hexosamine residues in N-acetyl-beta-D-hexosaminides.. It participates in cell wall biogenesis; peptidoglycan recycling. Plays a role in peptidoglycan recycling by cleaving the terminal beta-1,4-linked N-acetylglucosamine (GlcNAc) from peptide-linked peptidoglycan fragments, giving rise to free GlcNAc, anhydro-N-acetylmuramic acid and anhydro-N-acetylmuramic acid-linked peptides. The polypeptide is Beta-hexosaminidase (Mannheimia succiniciproducens (strain KCTC 0769BP / MBEL55E)).